The sequence spans 147 residues: uncharacterized protein (147 aa).

Positions 1 to 137 (MRDNTIGSLI…LYELMTKVHK (137 aa)) constitute an HTH marR-type domain. A DNA-binding region (H-T-H motif) is located at residues 53–76 (QMELAEKVTVTQGGISRMLTRLEK).

This is an uncharacterized protein from Bacillus cereus (strain ATCC 10987 / NRS 248).